The primary structure comprises 229 residues: Uracil-DNA glycosylase (229 aa).

The active-site Proton acceptor is Asp-71.

It belongs to the uracil-DNA glycosylase (UDG) superfamily. UNG family.

Its subcellular location is the cytoplasm. The catalysed reaction is Hydrolyzes single-stranded DNA or mismatched double-stranded DNA and polynucleotides, releasing free uracil.. Its function is as follows. Excises uracil residues from the DNA which can arise as a result of misincorporation of dUMP residues by DNA polymerase or due to deamination of cytosine. This Campylobacter lari (strain RM2100 / D67 / ATCC BAA-1060) protein is Uracil-DNA glycosylase.